Reading from the N-terminus, the 652-residue chain is DNA ligase (652 aa).

Residues D29–D33, S78–L79, and E107 each bind NAD(+). K109 (N6-AMP-lysine intermediate) is an active-site residue. NAD(+)-binding residues include R130, E164, K278, and K302. Residues C395, C398, C413, and C418 each coordinate Zn(2+). Positions D577–L652 constitute a BRCT domain.

The protein belongs to the NAD-dependent DNA ligase family. LigA subfamily. Requires Mg(2+) as cofactor. It depends on Mn(2+) as a cofactor.

It carries out the reaction NAD(+) + (deoxyribonucleotide)n-3'-hydroxyl + 5'-phospho-(deoxyribonucleotide)m = (deoxyribonucleotide)n+m + AMP + beta-nicotinamide D-nucleotide.. Functionally, DNA ligase that catalyzes the formation of phosphodiester linkages between 5'-phosphoryl and 3'-hydroxyl groups in double-stranded DNA using NAD as a coenzyme and as the energy source for the reaction. It is essential for DNA replication and repair of damaged DNA. This chain is DNA ligase, found in Streptococcus equi subsp. equi (strain 4047).